The following is an 82-amino-acid chain: Small ribosomal subunit protein uS17 (82 aa).

It belongs to the universal ribosomal protein uS17 family. As to quaternary structure, part of the 30S ribosomal subunit.

Its function is as follows. One of the primary rRNA binding proteins, it binds specifically to the 5'-end of 16S ribosomal RNA. In Tolumonas auensis (strain DSM 9187 / NBRC 110442 / TA 4), this protein is Small ribosomal subunit protein uS17.